We begin with the raw amino-acid sequence, 379 residues long: Chaperone protein DnaJ (379 aa).

The region spanning 5–70 is the J domain; the sequence is DYYEILEVSR…EKRAAYDRYG (66 aa). A CR-type zinc finger spans residues 135 to 213; that stretch reads GIKVPISYVT…CGGSGRVRNE (79 aa). Cysteine 148, cysteine 151, cysteine 165, cysteine 168, cysteine 187, cysteine 190, cysteine 201, and cysteine 204 together coordinate Zn(2+). CXXCXGXG motif repeat units lie at residues 148–155, 165–172, 187–194, and 201–208; these read CSSCSGIG, CGNCNGAG, CNVCNGEG, and CRRCGGSG.

It belongs to the DnaJ family. Homodimer. The cofactor is Zn(2+).

Its subcellular location is the cytoplasm. Functionally, participates actively in the response to hyperosmotic and heat shock by preventing the aggregation of stress-denatured proteins and by disaggregating proteins, also in an autonomous, DnaK-independent fashion. Unfolded proteins bind initially to DnaJ; upon interaction with the DnaJ-bound protein, DnaK hydrolyzes its bound ATP, resulting in the formation of a stable complex. GrpE releases ADP from DnaK; ATP binding to DnaK triggers the release of the substrate protein, thus completing the reaction cycle. Several rounds of ATP-dependent interactions between DnaJ, DnaK and GrpE are required for fully efficient folding. Also involved, together with DnaK and GrpE, in the DNA replication of plasmids through activation of initiation proteins. This Anaplasma marginale (strain Florida) protein is Chaperone protein DnaJ.